Consider the following 455-residue polypeptide: Bifunctional protein GlmU (455 aa).

The segment at 1–226 (MSLDIVILAA…AMEVQGANDR (226 aa)) is pyrophosphorylase. Residues 8-11 (LAAG), Lys-22, Gln-73, 78-79 (GT), 99-101 (YGD), Gly-136, Glu-151, Asn-166, and Asn-224 contribute to the UDP-N-acetyl-alpha-D-glucosamine site. Residue Asp-101 participates in Mg(2+) binding. Asn-224 is a Mg(2+) binding site. Residues 227–247 (KQLSELERHYQLREARRLMAA) form a linker region. Residues 248–455 (GVTLRDPSRF…WKRPVKITKD (208 aa)) form an N-acetyltransferase region. UDP-N-acetyl-alpha-D-glucosamine contacts are provided by Arg-330 and Lys-348. The active-site Proton acceptor is His-360. The UDP-N-acetyl-alpha-D-glucosamine site is built by Tyr-363 and Asn-374. Acetyl-CoA contacts are provided by residues Ala-377, 383–384 (NY), Ser-402, Ala-420, and Arg-437.

In the N-terminal section; belongs to the N-acetylglucosamine-1-phosphate uridyltransferase family. This sequence in the C-terminal section; belongs to the transferase hexapeptide repeat family. In terms of assembly, homotrimer. It depends on Mg(2+) as a cofactor.

It is found in the cytoplasm. The catalysed reaction is alpha-D-glucosamine 1-phosphate + acetyl-CoA = N-acetyl-alpha-D-glucosamine 1-phosphate + CoA + H(+). It catalyses the reaction N-acetyl-alpha-D-glucosamine 1-phosphate + UTP + H(+) = UDP-N-acetyl-alpha-D-glucosamine + diphosphate. It functions in the pathway nucleotide-sugar biosynthesis; UDP-N-acetyl-alpha-D-glucosamine biosynthesis; N-acetyl-alpha-D-glucosamine 1-phosphate from alpha-D-glucosamine 6-phosphate (route II): step 2/2. It participates in nucleotide-sugar biosynthesis; UDP-N-acetyl-alpha-D-glucosamine biosynthesis; UDP-N-acetyl-alpha-D-glucosamine from N-acetyl-alpha-D-glucosamine 1-phosphate: step 1/1. Its pathway is bacterial outer membrane biogenesis; LPS lipid A biosynthesis. Catalyzes the last two sequential reactions in the de novo biosynthetic pathway for UDP-N-acetylglucosamine (UDP-GlcNAc). The C-terminal domain catalyzes the transfer of acetyl group from acetyl coenzyme A to glucosamine-1-phosphate (GlcN-1-P) to produce N-acetylglucosamine-1-phosphate (GlcNAc-1-P), which is converted into UDP-GlcNAc by the transfer of uridine 5-monophosphate (from uridine 5-triphosphate), a reaction catalyzed by the N-terminal domain. In Pseudomonas syringae pv. tomato (strain ATCC BAA-871 / DC3000), this protein is Bifunctional protein GlmU.